Reading from the N-terminus, the 569-residue chain is Serine/threonine-protein kinase gad8 (569 aa).

Residues 19-63 are disordered; sequence GLNSGGSSFTRGLKNSTLSSTSSRKSSDEKSRKSSEDKRSPQSTV. The segment covering 31–42 has biased composition (low complexity); the sequence is LKNSTLSSTSSR. Over residues 43-58 the composition is skewed to basic and acidic residues; it reads KSSDEKSRKSSEDKRS. In terms of domain architecture, C2 spans 45–202; it reads SDEKSRKSSE…IVNKLTDEWV (158 aa). One can recognise a Protein kinase domain in the interval 230–485; sequence FELLKVVGKG…AQEIKNHPFF (256 aa). ATP-binding positions include 236–244 and Lys-259; that span reads VGKGSFGKV. Asp-353 serves as the catalytic Proton acceptor. A Phosphothreonine; by ksg1 modification is found at Thr-387. The AGC-kinase C-terminal domain maps to 486 to 557; it reads DDIDWKKLCA…QRPTTIDTSD (72 aa). Phosphoserine; by TORC2 is present on residues Ser-527 and Ser-546.

The protein belongs to the protein kinase superfamily. AGC Ser/Thr protein kinase family. Phosphorylated by ksg1 and target of rapamycin complex 2 (TORC2), affecting the kinase activity of gad8 in a nutrient-dependent manner.

It catalyses the reaction L-seryl-[protein] + ATP = O-phospho-L-seryl-[protein] + ADP + H(+). The catalysed reaction is L-threonyl-[protein] + ATP = O-phospho-L-threonyl-[protein] + ADP + H(+). Involved in a signaling module for sexual development and cell growth under stressed conditions. Required for G1 arrest under nitrogen starvation and for growth at high temperature and osmolarity. The chain is Serine/threonine-protein kinase gad8 from Schizosaccharomyces pombe (strain 972 / ATCC 24843) (Fission yeast).